A 225-amino-acid chain; its full sequence is Small ribosomal subunit protein uS3 (225 aa).

Residues Val-16–Lys-85 form the KH type-2 domain. Residues Gly-200 to Ser-225 are disordered. Basic and acidic residues predominate over residues Glu-208–Arg-217.

The protein belongs to the universal ribosomal protein uS3 family. Part of the 30S ribosomal subunit.

Functionally, binds the lower part of the 30S subunit head. This chain is Small ribosomal subunit protein uS3, found in Thermoplasma volcanium (strain ATCC 51530 / DSM 4299 / JCM 9571 / NBRC 15438 / GSS1).